The chain runs to 566 residues: MEHLFDYVGHFGRFQAYLYFASAFQTISCGIHYLASVFIAVTPKFICRAPGNISTVLLPNASTLRLEDAWESWTSKDYLVVQQENGDIWELNQCSRLKREDASYLTYFYDGNKTLFSCSNGYHYDKSNLESSIVTEWDLVCDREWLAKLIQPIFMLGVLIGAVIFGDIADRVGRRPIIWITSTGQFLFGIAVAFTFDYYSFVIVRFLLAMVSSGYYVVVFVYLTEYVGIKARTWASMHVHAFFAVGVMIVSLVGFLVRTWWIYQIILSLTTLPFVLCCWMLPETPFWLYSQGKYKEVEKLIRTIEKWNKISTPCKLSELCPAQETHVDQPNTLKNHNVLDLFYNWSFARRTITVWLIWFTGSLGYYVFALNSVNLGGNEYLNLFLTGAVEIPSYIVACLGMDKIGRRNTLAPFLIISAVICGVIMLIPQDHSTVTIAMSMAGKFSIAVAFGLIYLYTAELYPTIVRSLAVGSGSMMCRIGSVVAPFCVYLTDVWIFMPQMLVGIMAFLTGILTLTLPETLGIPLTSTMEEAAEMGTTSGITKRKALTESNGVVMEKLDQTTDNAAS.

A helical transmembrane segment spans residues 20-40; the sequence is FASAFQTISCGIHYLASVFIA. Asparagine 52, asparagine 60, and asparagine 112 each carry an N-linked (GlcNAc...) asparagine glycan. Helical transmembrane passes span 149–169, 176–196, 201–221, 237–257, and 261–281; these read LIQP…GDIA, PIIW…AFTF, FVIV…VVFV, MHVH…GFLV, and WIYQ…CWML. Asparagine 344 is a glycosylation site (N-linked (GlcNAc...) asparagine). 6 consecutive transmembrane segments (helical) span residues 351–371, 381–401, 408–428, 436–456, 468–488, and 493–513; these read TITV…FALN, LNLF…CLGM, NTLA…MLIP, IAMS…IYLY, LAVG…PFCV, and VWIF…GILT.

The protein belongs to the major facilitator (TC 2.A.1) superfamily. Organic cation transporter (TC 2.A.1.19) family.

It localises to the membrane. In terms of biological role, high affinity carnitine transporter. The polypeptide is Solute carrier family 22 member 16 (slc22a16) (Xenopus laevis (African clawed frog)).